The following is a 207-amino-acid chain: Fibroblast growth factor 18 (207 aa).

The N-terminal stretch at 1–27 is a signal peptide; it reads MYSAPSTCTCLCLHFLLLCFQVQVLAA. N39 carries an N-linked (GlcNAc...) asparagine glycan. C109 and C127 are oxidised to a cystine. N-linked (GlcNAc...) asparagine glycosylation occurs at N137.

This sequence belongs to the heparin-binding growth factors family. As to quaternary structure, interacts with FGFR3 and FGFR4.

The protein localises to the secreted. Its function is as follows. Plays an important role in the regulation of cell proliferation, cell differentiation and cell migration. Required for normal ossification and bone development. Stimulates hepatic and intestinal proliferation. The chain is Fibroblast growth factor 18 (FGF18) from Bos taurus (Bovine).